The following is a 411-amino-acid chain: MVAEIICVGTELLLGQILNTNSQYLAQKLAELGIDLYFQTTVGDNMERLKMAIDIATKRSDVLIFTGGLGPTSDDITKEAVADYFGLTLVLDEDILRRIESFFERRQVKMPQINKKQAYVPEGAKVLHNKNGTAPGLIIEKDGKIAILLPGPPFEMQPMFEEEVLPYLEKFSKQKIYSRVLKFIGIGESSIEEALKDLILSQTDPTMALYAKPFEVELRITTKKESEELAKSLLQSMEYRIRERLGEYIYGVDRQLLEEVVIGLLTEKKLKVSVAESCTGGLICNKLTNVPGASEVFDRGFIVYSNEAKMKLLGVPEQVLKEHGAVSSQTARFMAQGALSNSLSDIALSVTGIAGPGGGSETKPVGLVYIGIATKDNVESFEFRFSGDRLRIKEMTSKAALNILRKKIIDY.

Belongs to the CinA family.

The polypeptide is Putative competence-damage inducible protein (Caldicellulosiruptor bescii (strain ATCC BAA-1888 / DSM 6725 / KCTC 15123 / Z-1320) (Anaerocellum thermophilum)).